The following is a 498-amino-acid chain: Hexokinase-3 (498 aa).

A helical transmembrane segment spans residues 4–24 (VAVAFAAVAVVAACSVAAVMV). Residues 35 to 494 (RTVVEILKEL…SSIGSALLVA (460 aa)) enclose the Hexokinase domain. The segment at 90-227 (TGREKGTYYA…GLDMHVAALV (138 aa)) is hexokinase small subdomain. Residues Gly-104 and Thr-105 each contribute to the ADP site. D-glucose-binding residues include Thr-193, Lys-194, Asn-228, and Asp-229. Residues 228-483 (NDTVGALSLG…QYVVVKAMED (256 aa)) form a hexokinase large subdomain region. Thr-252 lines the ADP pocket. Residues Asn-255, Glu-283, and Glu-314 each contribute to the D-glucose site. Gly-448 serves as a coordination point for ADP.

The protein belongs to the hexokinase family. As to expression, expressed in roots, emerging lateral roots, vascular tissues of cotyledons, roots and leaves, root and shoot meristems, anther filaments and funiculi of mature seeds.

The protein resides in the mitochondrion outer membrane. It catalyses the reaction a D-hexose + ATP = a D-hexose 6-phosphate + ADP + H(+). The catalysed reaction is D-fructose + ATP = D-fructose 6-phosphate + ADP + H(+). The enzyme catalyses D-glucose + ATP = D-glucose 6-phosphate + ADP + H(+). It participates in carbohydrate metabolism; hexose metabolism. The protein operates within carbohydrate degradation; glycolysis; D-glyceraldehyde 3-phosphate and glycerone phosphate from D-glucose: step 1/4. Functionally, fructose and glucose phosphorylating enzyme. May be involved in the phosphorylation of glucose during the export from mitochondrion to cytosol. Plays a role in plant growth and development, perhaps by mediating cross-talk between glucose and hormone response pathways. Involved in root hair cell development by mediating certain aspects of cross talk between glucose and ethylene response pathways. The chain is Hexokinase-3 from Arabidopsis thaliana (Mouse-ear cress).